The chain runs to 186 residues: dTTP/UTP pyrophosphatase (186 aa).

Asp-70 functions as the Proton acceptor in the catalytic mechanism.

The protein belongs to the Maf family. YhdE subfamily. It depends on a divalent metal cation as a cofactor.

Its subcellular location is the cytoplasm. It catalyses the reaction dTTP + H2O = dTMP + diphosphate + H(+). The catalysed reaction is UTP + H2O = UMP + diphosphate + H(+). In terms of biological role, nucleoside triphosphate pyrophosphatase that hydrolyzes dTTP and UTP. May have a dual role in cell division arrest and in preventing the incorporation of modified nucleotides into cellular nucleic acids. This Vibrio vulnificus (strain CMCP6) protein is dTTP/UTP pyrophosphatase.